Consider the following 477-residue polypeptide: Ribulose bisphosphate carboxylase large chain (477 aa).

A propeptide spanning residues 1–2 (MS) is cleaved from the precursor. Residue P3 is modified to N-acetylproline. Position 14 is an N6,N6,N6-trimethyllysine (K14). Substrate contacts are provided by N123 and T173. K175 acts as the Proton acceptor in catalysis. K177 lines the substrate pocket. Residues K201, D203, and E204 each contribute to the Mg(2+) site. K201 is subject to N6-carboxylysine. H294 acts as the Proton acceptor in catalysis. R295, H327, and S379 together coordinate substrate.

This sequence belongs to the RuBisCO large chain family. Type I subfamily. Heterohexadecamer of 8 large chains and 8 small chains; disulfide-linked. The disulfide link is formed within the large subunit homodimers. Requires Mg(2+) as cofactor. Post-translationally, the disulfide bond which can form in the large chain dimeric partners within the hexadecamer appears to be associated with oxidative stress and protein turnover.

It is found in the plastid. Its subcellular location is the chloroplast. The enzyme catalyses 2 (2R)-3-phosphoglycerate + 2 H(+) = D-ribulose 1,5-bisphosphate + CO2 + H2O. It carries out the reaction D-ribulose 1,5-bisphosphate + O2 = 2-phosphoglycolate + (2R)-3-phosphoglycerate + 2 H(+). RuBisCO catalyzes two reactions: the carboxylation of D-ribulose 1,5-bisphosphate, the primary event in carbon dioxide fixation, as well as the oxidative fragmentation of the pentose substrate in the photorespiration process. Both reactions occur simultaneously and in competition at the same active site. The protein is Ribulose bisphosphate carboxylase large chain of Hyophorbe lagenicaulis (Bottle palm).